Consider the following 657-residue polypeptide: LIM and SH3 domain protein Lasp (657 aa).

The LIM zinc-binding domain maps to 3–63 (KTCARCQKVV…EAHIPKAKAT (61 aa)). 2 Nebulin repeats span residues 64–95 (AIADTPELKRIAENTKIQSNVKYHADFEKAKG) and 96–130 (KFTQVADDPETLRIKQNTKHISNVAYHGDLEKKAA). Disordered stretches follow at residues 130–151 (AMEKQRGSAEVSDSSNESEYFS), 164–223 (PTAS…PIQH), 235–257 (YQQLQQQQQQQQQQRAQQQQLHD), 294–318 (LYPTATSQQQQMPPPQSPANPQQQA), 332–415 (NSHH…SAAS), and 460–528 (KQHA…PKRI). Polar residues predominate over residues 140 to 150 (VSDSSNESEYF). 2 stretches are compositionally biased toward low complexity: residues 172–215 (AATT…QQQT) and 236–254 (QQLQQQQQQQQQQRAQQQQ). Residues 332–341 (NSHHPSGNSV) show a composition bias toward polar residues. The span at 342-357 (DQYDQPQQQQHQPQQQ) shows a compositional bias: low complexity. The span at 358-370 (STNPTLVAAQQQQ) shows a compositional bias: polar residues. Residues 371–403 (SHHSLLNNNASNGGISHSHHSNINNNGHGSQNQ) show a composition bias toward low complexity. The segment covering 460 to 475 (KQHASNGHMPNQQQQH) has biased composition (polar residues). Residues S505 and S530 each carry the phosphoserine modification. The interval 548-592 (EQAHQQQKHQQYYQQVQMMQQQEHPPQQQQMRQQPSYSSLQEKQS) is disordered. Over residues 549–586 (QAHQQQKHQQYYQQVQMMQQQEHPPQQQQMRQQPSYSS) the composition is skewed to low complexity. The SH3 domain occupies 596–657 (TAMRVYRAIY…PANYVEQAVI (62 aa)).

Interacts with osk.

In Drosophila melanogaster (Fruit fly), this protein is LIM and SH3 domain protein Lasp.